The primary structure comprises 236 residues: Alpha-S2-casein (236 aa).

Positions 1–15 are cleaved as a signal peptide; that stretch reads MKFFIFTCLLAVALA. A phosphoserine mark is found at Ser23, Ser24, Ser25, Ser28, Ser47, Ser80, Ser81, Ser82, Ser85, Ser157, and Ser169. Residues 72–93 form a disordered region; it reads PTEVYSSSSSSEESAKFPTERE. A compositionally biased stretch (basic and acidic residues) spans 84–93; it reads ESAKFPTERE.

The protein belongs to the alpha-casein family. Post-translationally, there are at least three different forms found in milk, with varying degrees of phosphorylation. These include form 10-P which is phosphorylated at ten sites that have not been determined, form 11-P which is phosphorylated at eleven sites and form 12-P which is phosphorylated at twelve sites. Mammary gland specific. Secreted in milk.

The protein localises to the secreted. Its function is as follows. Important role in the capacity of milk to transport calcium phosphate. In Equus asinus (Donkey), this protein is Alpha-S2-casein.